The following is a 607-amino-acid chain: Monocarboxylate transporter 7 (607 aa).

The tract at residues 1–84 (MRASGQGPQR…PAETGCSRSR (84 aa)) is disordered. Over 1-105 (MRASGQGPQR…ANVYTQVPDG (105 aa)) the chain is Cytoplasmic. The chain crosses the membrane as a helical span at residues 106–126 (GWGWAVAVSFFFVEVFTYGII). Residues 127–146 (KSFGVFFNDLMDSFDESNSK) are Extracellular-facing. Residues 147–167 (ISWIISICVFVLTFTAPLSTV) traverse the membrane as a helical segment. The Cytoplasmic segment spans residues 168 to 175 (LSNRFGHR). A helical membrane pass occupies residues 176 to 196 (LVVMAGGLLISLGMITASFSQ). Over 197–202 (RVYHMY) the chain is Extracellular. Residues 203–223 (ISIGVISGLGYCFSFLPTVTI) form a helical membrane-spanning segment. Residues 224-233 (LSQYFDKRRS) lie on the Cytoplasmic side of the membrane. Residues 234-254 (VVTAVASTGECFAVFAFAPAI) form a helical membrane-spanning segment. The Extracellular segment spans residues 255-268 (TALKEHIGWRYSLL). Residues 269–289 (FVGLLQLNIMVCGALLRPIII) traverse the membrane as a helical segment. Residues 290 to 383 (QGPGQSPKAV…KEKSFICYAL (94 aa)) lie on the Cytoplasmic side of the membrane. A phosphoserine mark is found at S319, S322, S325, and S332. The chain crosses the membrane as a helical span at residues 384–404 (FGLFATLGFFAPSLYIIPLGI). Over 405–414 (SLGIDPDRAA) the chain is Extracellular. A helical membrane pass occupies residues 415 to 435 (FLLSTMAIAEVFGRIGAGFVL). At 436 to 442 (NREPIRK) the chain is on the cytoplasmic side. A helical transmembrane segment spans residues 443 to 463 (IYIELICVILLTASLFAFTFA). The Extracellular segment spans residues 464–465 (TE). Residues 466-486 (FWGLMLCSVFFGSMVGTIGGT) form a helical membrane-spanning segment. The Cytoplasmic portion of the chain corresponds to 487–507 (HIPMLAEDDVVGIEKMSSAAG). Residues 508 to 528 (VYVFIQSISGLAGPPLAGLLV) form a helical membrane-spanning segment. The Extracellular segment spans residues 529-536 (DQSKIYSR). A helical transmembrane segment spans residues 537-557 (AFYSCAAGMCLAAVCLALVRP). Topologically, residues 558–607 (CKKGLCQNSHSGENQTDRQRGKALQDIPEDFLEMDLGKCEHRAHMKMDPV) are cytoplasmic.

This sequence belongs to the major facilitator superfamily. Monocarboxylate porter (TC 2.A.1.13) family. As to quaternary structure, forms functional complexes with BSG/CD147 or EMB/GP70 ancillary proteins.

The protein resides in the basolateral cell membrane. The catalysed reaction is taurine(out) = taurine(in). Monocarboxylate transporter selective for taurine. May associate with BSG/CD147 or EMB/GP70 ancillary proteins to mediate facilitative efflux or influx of taurine across the plasma membrane. The transport is pH- and sodium-independent. Rather low-affinity, is likely effective for taurine transport in tissues where taurine is present at high concentrations. This chain is Monocarboxylate transporter 7, found in Mus musculus (Mouse).